The primary structure comprises 347 residues: GPN-loop GTPase 2 (347 aa).

GTP is bound at residue 12 to 17 (GSGKST). A Gly-Pro-Asn (GPN)-loop; involved in dimer interface motif is present at residues 69 to 71 (GPN). GTP is bound at residue 175–178 (SKID).

Belongs to the GPN-loop GTPase family. Heterodimers with NPA3/GPN1 or GPN3. Binds to RNA polymerase II (RNAPII).

Its subcellular location is the cytoplasm. Functionally, small GTPase required for proper localization of RNA polymerase II and III (RNAPII and RNAPIII). May act at an RNAP assembly step prior to nuclear import. Required for establishment of sister chromatid cohesion. The chain is GPN-loop GTPase 2 from Saccharomyces cerevisiae (strain ATCC 204508 / S288c) (Baker's yeast).